The chain runs to 401 residues: Diphosphomevalonate decarboxylase (401 aa).

The residue at position 2 (Ala-2) is an N-acetylalanine. (R)-5-diphosphomevalonate contacts are provided by residues 24–27, Arg-79, 157–162, and Thr-213; these read YWGK and SGSACR. The segment at 382–401 is disordered; sequence VLDDPHHHLLGPDGLPQRDL.

It belongs to the diphosphomevalonate decarboxylase family. Homodimer.

The protein resides in the cytoplasm. It carries out the reaction (R)-5-diphosphomevalonate + ATP = isopentenyl diphosphate + ADP + phosphate + CO2. The protein operates within steroid biosynthesis; cholesterol biosynthesis. Functionally, catalyzes the ATP dependent decarboxylation of (R)-5-diphosphomevalonate to form isopentenyl diphosphate (IPP). Functions in the mevalonate (MVA) pathway leading to isopentenyl diphosphate (IPP), a key precursor for the biosynthesis of isoprenoids and sterol synthesis. The chain is Diphosphomevalonate decarboxylase (Mvd) from Rattus norvegicus (Rat).